Reading from the N-terminus, the 110-residue chain is Large ribosomal subunit protein uL22 (110 aa).

A compositionally biased stretch (basic residues) spans Ala84–Thr95. The interval Ala84 to Ala110 is disordered.

It belongs to the universal ribosomal protein uL22 family. In terms of assembly, part of the 50S ribosomal subunit.

In terms of biological role, this protein binds specifically to 23S rRNA; its binding is stimulated by other ribosomal proteins, e.g. L4, L17, and L20. It is important during the early stages of 50S assembly. It makes multiple contacts with different domains of the 23S rRNA in the assembled 50S subunit and ribosome. Its function is as follows. The globular domain of the protein is located near the polypeptide exit tunnel on the outside of the subunit, while an extended beta-hairpin is found that lines the wall of the exit tunnel in the center of the 70S ribosome. The protein is Large ribosomal subunit protein uL22 of Campylobacter concisus (strain 13826).